We begin with the raw amino-acid sequence, 487 residues long: ATP synthase subunit beta (487 aa).

Residue 164–171 (GGAGVGKT) participates in ATP binding.

This sequence belongs to the ATPase alpha/beta chains family. In terms of assembly, F-type ATPases have 2 components, CF(1) - the catalytic core - and CF(0) - the membrane proton channel. CF(1) has five subunits: alpha(3), beta(3), gamma(1), delta(1), epsilon(1). CF(0) has four main subunits: a(1), b(1), b'(1) and c(9-12).

It localises to the cellular thylakoid membrane. It carries out the reaction ATP + H2O + 4 H(+)(in) = ADP + phosphate + 5 H(+)(out). Functionally, produces ATP from ADP in the presence of a proton gradient across the membrane. The catalytic sites are hosted primarily by the beta subunits. The polypeptide is ATP synthase subunit beta (Synechococcus sp. (strain CC9311)).